Reading from the N-terminus, the 309-residue chain is Taste receptor type 2 member 105 (309 aa).

Residues 1–9 are Extracellular-facing; that stretch reads MLSAAEGIL. Residues 10-32 traverse the membrane as a helical segment; it reads LSIATVEAGLGVLGNTFIALVNC. At 33–44 the chain is on the cytoplasmic side; the sequence is MDWAKNKKLSKI. A helical transmembrane segment spans residues 45 to 67; that stretch reads GFLLFGLATSRIFIVWILILDAY. The Extracellular portion of the chain corresponds to 68 to 86; sequence AKLFFPGKYLSKSLTEIIS. The helical transmembrane segment at 87–109 threads the bilayer; the sequence is CIWMTVNHMTVWFATSLSIFYFL. The Cytoplasmic segment spans residues 110–129; it reads KIANFSHYIFLWLKRRTDKV. The helical transmembrane segment at 130–149 threads the bilayer; the sequence is FAFLLWCLLISWAISFSFTV. At 150–177 the chain is on the extracellular side; the sequence is KVMKSNPKNHGNRTSGTHWEKREFTSNY. An N-linked (GlcNAc...) asparagine glycan is attached at Asn161. The chain crosses the membrane as a helical span at residues 178–200; it reads VLINIGVISLLIMTLTACFLLII. The Cytoplasmic segment spans residues 201 to 226; it reads SLWKHSRQMQSNVSGFRDLNTEAHVK. The helical transmembrane segment at 227-249 threads the bilayer; that stretch reads AIKFLISFIILFILYFIGVAVEI. At 250-258 the chain is on the extracellular side; sequence ICMFIPENK. A helical membrane pass occupies residues 259–281; it reads LLFIFGLTTASVYPCCHSVILIL. Residues 282–309 lie on the Cytoplasmic side of the membrane; that stretch reads TNSQLKQAFVKVLEGLKFSENGKDLRAT.

It belongs to the G-protein coupled receptor T2R family. In terms of tissue distribution, expressed in subsets of taste receptor cells of the tongue and palate epithelium and exclusively in gustducin-positive cells. Expressed in 15% taste bud cells in circumvallate and foliate papillae but only in 2% in fungiform papillae. Expressed in the duodenum, antrum and fundus (part of the stomach).

The protein localises to the membrane. Its function is as follows. Gustducin-coupled cycloheximide receptor implicated in the perception of bitter compounds in the oral cavity and the gastrointestinal tract. Signals through PLCB2 and the calcium-regulated cation channel TRPM5. This is Taste receptor type 2 member 105 (Tas2r105) from Rattus norvegicus (Rat).